The sequence spans 199 residues: Superoxide dismutase [Mn/Fe] 1 (199 aa).

Residues H27, H81, D161, and H165 each contribute to the Fe(3+) site. Residues H27, H81, D161, and H165 each contribute to the Mn(2+) site.

This sequence belongs to the iron/manganese superoxide dismutase family. As to quaternary structure, homodimer. Can also form a heterodimer with SodM. The cofactor is Mn(2+). Fe(3+) serves as cofactor.

It carries out the reaction 2 superoxide + 2 H(+) = H2O2 + O2. Functionally, destroys superoxide anion radicals which are normally produced within the cells and which are toxic to biological systems. Catalyzes the dismutation of superoxide anion radicals into O2 and H2O2 by successive reduction and oxidation of the transition metal ion at the active site. The chain is Superoxide dismutase [Mn/Fe] 1 (sodA) from Staphylococcus aureus (strain USA300).